A 408-amino-acid chain; its full sequence is Pleckstrin homology domain-containing family O member 1 (408 aa).

The tract at residues 1 to 21 is disordered; it reads MKKSGSGKRGPPDGNHQSAAP. Positions 20 to 131 constitute a PH domain; that stretch reads APEKVGWVRK…WINALSSAIT (112 aa). The segment at 132 to 192 is interaction with capping proteins (CPs); it reads RAKNRILDEV…MLTLDLIQEE (61 aa). The segment at 135 to 307 is interaction with ATM, CKIP, IFP35 and NMI; that stretch reads NRILDEVTVE…PAQPGQLSRI (173 aa). The tract at residues 217-264 is disordered; that stretch reads LAGSRRRADSDRIQPSSQRASSLSRPWEKPDKGAPYTPQALKKFPSTE. S226 bears the Phosphoserine mark. Residues 229-240 are compositionally biased toward polar residues; sequence IQPSSQRASSLS. 2 positions are modified to phosphoserine: S270 and S341. The tract at residues 307 to 408 is negative regulator of AP-1 activity; it reads IQDLVARKLE…QHSQYRKSLM (102 aa). Disordered regions lie at residues 325–348 and 389–408; these read VQGLGDGKRKAKDPPQSPPDSESE and TPDSHLRQTSQHSQYRKSLM. The segment covering 389–401 has biased composition (polar residues); that stretch reads TPDSHLRQTSQHS.

Heterodimer or homodimer. Interacts with CK2 and actin capping subunits (capping protein CP-alpha and CP-beta). CKIP1 and CK2 together inhibit the activity of actin capping protein at the barbed ends of actin filaments. Interacts with ATM, IFP35, JUN, JUND, NMI and PI3K. Interacts with AKT1, AKT2 and AKT3 (each isozyme of PKB), PtdIns(3,5)P2, PtdIns(4,5)P2 and PtdIns(3,4,5)P2. Post-translationally, C-terminal fragments could be released during apoptosis via caspase-3-dependent cleavage.

Its subcellular location is the cell membrane. The protein resides in the nucleus. It localises to the cytoplasm. In terms of biological role, plays a role in the regulation of the actin cytoskeleton through its interactions with actin capping protein (CP). May function to target CK2 to the plasma membrane thereby serving as an adapter to facilitate the phosphorylation of CP by protein kinase 2 (CK2). Appears to target ATM to the plasma membrane. Appears to also inhibit tumor cell growth by inhibiting AKT-mediated cell-survival. Also implicated in PI3K-regulated muscle differentiation, the regulation of AP-1 activity (plasma membrane bound AP-1 regulator that translocates to the nucleus) and the promotion of apoptosis induced by tumor necrosis factor TNF. When bound to PKB, it inhibits it probably by decreasing PKB level of phosphorylation. The chain is Pleckstrin homology domain-containing family O member 1 (Plekho1) from Mus musculus (Mouse).